Reading from the N-terminus, the 321-residue chain is Ribose-phosphate pyrophosphokinase (321 aa).

ATP contacts are provided by residues 44–46 and 103–104; these read DGE and RQ. 2 residues coordinate Mg(2+): histidine 137 and aspartate 179. Lysine 202 is an active-site residue. D-ribose 5-phosphate is bound by residues arginine 204, aspartate 228, and 232-236; that span reads DTAGT.

Belongs to the ribose-phosphate pyrophosphokinase family. Class I subfamily. In terms of assembly, homohexamer. Requires Mg(2+) as cofactor.

Its subcellular location is the cytoplasm. The catalysed reaction is D-ribose 5-phosphate + ATP = 5-phospho-alpha-D-ribose 1-diphosphate + AMP + H(+). It functions in the pathway metabolic intermediate biosynthesis; 5-phospho-alpha-D-ribose 1-diphosphate biosynthesis; 5-phospho-alpha-D-ribose 1-diphosphate from D-ribose 5-phosphate (route I): step 1/1. In terms of biological role, involved in the biosynthesis of the central metabolite phospho-alpha-D-ribosyl-1-pyrophosphate (PRPP) via the transfer of pyrophosphoryl group from ATP to 1-hydroxyl of ribose-5-phosphate (Rib-5-P). The protein is Ribose-phosphate pyrophosphokinase of Staphylococcus aureus (strain Mu50 / ATCC 700699).